A 993-amino-acid polypeptide reads, in one-letter code: MRGMSYNITHECDAINILSDNLHEGAISEDMVALSGPAIELLENNVGSSKNSYQEDEGSSSIDENAPLISIKRKRRIRTVKSTSNKELVQRKASKPTKQKSVFTPLEQQYLELKKNYQETILAIEVGYKFRFFGKDAKIASEVLGISCYFEHNFLNASVPSYRIDYHLERLINFGLKVAVVRQTETAALKSTSSSRNTLFDRRVARVLTKGTTLDDSFFRFEQTQHGTLQASQFILCVADNVDKSKAKSGRVQVGLIAIQLSSGTTVYDHFQDDFLRSELQTRLSHFQPCELIYSNKLSSESVALLNHYVSTEKTCGRVVRVQHAVQQDVKLALENLQDFFSSKCIMSGSKIIELHMEKVKSLHSLSIICLDMAISYLMEFSLEDLFVASNFYQPFDSISSMVLSKQALEGLELFVNQTDHTPVGSLFWVLDRTYTRFGQRMLQRWLQKPLVDKENIIERLDAVEELAFNSNSQVQAIRKMLYRLPDLEKGLSRIYYQRGFYKAASAFSKNSYSCFKSALLRRLIQQLPSISSIIDHFLGMFDQKEAENNNKVDMFKDIDNFDLSEEPNDVDYELAQEIRELKMSILMVRTEMDFHLQELRDYLEYPNLEFSIWGNVKFCIEVSKGCKKIPPDWIKLSSTRSLFRFHTPKIQSLLIELSSHEENLTISSEKIYRSFLSRISEHYNELRNVTTVLGTLDCLISFARISSQSGYTRPEFSDKELLIHESRHPMIELLSDKSFVPNHIHLSSDGVRCLLITGPNMGGKSSFVKQLALSAIMAQSGCFVPAKSALLPIFDSILIRMGSSDNLSVNMSTFMVEMLETKEVLSKATEKSMVIIDELGRGTSTIDGEAISYAVLHYLNQYIKSYLLFVTHFPSLGILERRFEGQLRCFHMGYLKSKEDFETSVSQSISFLYKLVPGVASKSYGLNVARMAGIPFSILSRATEISENYEKKHRNARKNVFIRKVAKLLMILNAEEIDFKRLFYDLTAFEEI.

The segment at 97 to 211 is mispair-binding domain; the sequence is TKQKSVFTPL…RRVARVLTKG (115 aa). 759–766 provides a ligand contact to ATP; that stretch reads GPNMGGKS.

This sequence belongs to the DNA mismatch repair MutS family. MSH3 subfamily. In terms of assembly, heterodimer consisting of msh2-msh3 (MutS beta). Forms a ternary complex with MutL alpha (mlh1-pms1).

It localises to the nucleus. Functionally, component of the post-replicative DNA mismatch repair system (MMR). Heterodimerizes with msh2 to form MutS beta, which binds to DNA mismatches thereby initiating DNA repair. Msh3 provides substrate-binding and substrate specificity to the complex. When bound, the MutS beta heterodimer bends the DNA helix and shields approximately 20 base pairs. Acts mainly to repair insertion-deletion loops (IDLs) from 2 to 13 nucleotides in size, but can also repair base-base and single insertion-deletion mismatches that occur during replication. After mismatch binding, forms a ternary complex with the MutL alpha heterodimer, which is thought to be responsible for directing the downstream MMR events, including strand discrimination, excision, and resynthesis. ATP binding and hydrolysis play a pivotal role in mismatch repair functions. Involved in termination of copy-synthesis during mating-type switching. This chain is DNA mismatch repair protein msh3 (msh3), found in Schizosaccharomyces pombe (strain 972 / ATCC 24843) (Fission yeast).